Consider the following 354-residue polypeptide: GTPase Obg (354 aa).

Positions Met1–Leu159 constitute an Obg domain. In terms of domain architecture, OBG-type G spans Ala160 to Phe333. Residues Gly166–Ser173, Phe191–Thr195, Asp212–Gly215, Thr283–Asp286, and Ser314–Val316 contribute to the GTP site. Ser173 and Thr193 together coordinate Mg(2+).

Belongs to the TRAFAC class OBG-HflX-like GTPase superfamily. OBG GTPase family. In terms of assembly, monomer. Mg(2+) serves as cofactor.

Its subcellular location is the cytoplasm. Functionally, an essential GTPase which binds GTP, GDP and possibly (p)ppGpp with moderate affinity, with high nucleotide exchange rates and a fairly low GTP hydrolysis rate. Plays a role in control of the cell cycle, stress response, ribosome biogenesis and in those bacteria that undergo differentiation, in morphogenesis control. The protein is GTPase Obg of Anaeromyxobacter dehalogenans (strain 2CP-C).